The sequence spans 334 residues: MPYINNFLVGPIGLGLKSLTWTENPVPDEEAFRIMNYALSHGCSFWDAGEFYGLSEPLANLQLLSRYFQKFPDSIDKVFLSVKGAFDPETHRVHGTRECITKSIKTVRETLKKVKTIDLYQCAAIDPDTPIEETMACLKEFVDSGDIRCIGLCEPSVEEIKRAHSVVRIAAIEVHYSMLFREIEYNGVKKLCHDLSIPLVAHSPLAHGLLTGRVTTMADIENLKKHHQCNEQPPSSTFSSTLPCIQALKELASKYDMSLAELALSFILSAGRGRILPIPSATSYDLIEASLGSFSKVLDTYQFAEVVSCLEKTLPPPASPNSEPQVTGGCSSMC.

Catalysis depends on Y52, which acts as the Proton donor. A disordered region spans residues 314–334 (LPPPASPNSEPQVTGGCSSMC). A compositionally biased stretch (polar residues) spans 320–334 (PNSEPQVTGGCSSMC).

Belongs to the aldo/keto reductase family.

The protein resides in the cytoplasm. The protein localises to the nucleus. This is an uncharacterized protein from Schizosaccharomyces pombe (strain 972 / ATCC 24843) (Fission yeast).